A 105-amino-acid polypeptide reads, in one-letter code: Nucleoid-associated protein TTHA1599 (105 aa).

This sequence belongs to the YbaB/EbfC family. In terms of assembly, homodimer.

The protein resides in the cytoplasm. The protein localises to the nucleoid. Its function is as follows. Binds to DNA and alters its conformation. May be involved in regulation of gene expression, nucleoid organization and DNA protection. The protein is Nucleoid-associated protein TTHA1599 of Thermus thermophilus (strain ATCC 27634 / DSM 579 / HB8).